A 572-amino-acid polypeptide reads, in one-letter code: MAKELKGIAASDGIAIAKAYLLVEPDLSYEKTEVTDVESEVKRFESALEVSRTELSTIREKAAKDLGEDKAQIFDAHLLVLNDPELTGPIEESIKNAKTNAETALQETTDMFIGMFESMDNEYMRERAADIKDVRKRVLSHLLGVTIPNPALIDEEVVVVAADLTPSDTAQLNRKFVKGFVTDIGGRTSHSAIMARSLEIPAVVGTKEVTASVAKNDIVIIDGLEGNVIIHPTEEQIAHYEKIKSDFALQQAEWEKLKNEKTVSKDGVHVELAANIGTPNDLEGVISNGGEAVGLYRTEFLYMGRDNFPTEEEQFEAYKAVVSGMDGKSVVVRTLDIGGDKTLPYLELPEEMNPFLGFRAIRLCFANEELFRTQLRALLRASVYGNLKIMFPMIATVNEFRQARDILLDEKAKLKAAGTEVSDSIELGIMIEIPAAAVLADQFAKEVDFFSIGTNDLIQYTMAADRMNERVSYLYQPYNPSILRLVKMVIDASHKEGKWTGMCGEMAGDQTAVPLLLGLGLDEFSMSASSILKSRSLIKRLDQSEMVKLAEEALNKSTAEEVVELVEKYTAE.

Residue His190 is the Tele-phosphohistidine intermediate of the active site. The phosphoenolpyruvate site is built by Arg297 and Arg333. 2 residues coordinate Mg(2+): Glu432 and Asp456. Phosphoenolpyruvate-binding positions include 455 to 456 (ND) and Arg466. Catalysis depends on Cys503, which acts as the Proton donor.

It belongs to the PEP-utilizing enzyme family. As to quaternary structure, homodimer. Mg(2+) serves as cofactor.

It localises to the cytoplasm. It carries out the reaction L-histidyl-[protein] + phosphoenolpyruvate = N(pros)-phospho-L-histidyl-[protein] + pyruvate. In terms of biological role, general (non sugar-specific) component of the phosphoenolpyruvate-dependent sugar phosphotransferase system (sugar PTS). This major carbohydrate active-transport system catalyzes the phosphorylation of incoming sugar substrates concomitantly with their translocation across the cell membrane. Enzyme I transfers the phosphoryl group from phosphoenolpyruvate (PEP) to the phosphoryl carrier protein (HPr). The protein is Phosphoenolpyruvate-protein phosphotransferase (ptsI) of Listeria innocua serovar 6a (strain ATCC BAA-680 / CLIP 11262).